The chain runs to 237 residues: MHTNGPVFAGWDGSVIQAQQLQQQLAQRVLLHDEVSATPQLLAGFDVGFEDDGQSTRAAAVLLDAHTLLPLETHVARVPTSMPYVPGLLSFRELPALLQALALLSRTPDLVFIDGQGIAHPRRLGIAAHFGVVTGLPCIGIAKQRLAGSFAEPGPERGDHTPILLGGAQIGWALRSKPRCNPLIVSPGHRVSMQGALGWTLRTLRSYRLPEPTRLADRLASRRGKMPALAADTPLLF.

Residues aspartate 46 and aspartate 114 each contribute to the Mg(2+) site.

Belongs to the endonuclease V family. The cofactor is Mg(2+).

It is found in the cytoplasm. The catalysed reaction is Endonucleolytic cleavage at apurinic or apyrimidinic sites to products with a 5'-phosphate.. DNA repair enzyme involved in the repair of deaminated bases. Selectively cleaves double-stranded DNA at the second phosphodiester bond 3' to a deoxyinosine leaving behind the intact lesion on the nicked DNA. The polypeptide is Endonuclease V (Xanthomonas oryzae pv. oryzae (strain PXO99A)).